Here is a 241-residue protein sequence, read N- to C-terminus: Probable 2-phosphosulfolactate phosphatase (241 aa).

It belongs to the ComB family. It depends on Mg(2+) as a cofactor.

The enzyme catalyses (2R)-O-phospho-3-sulfolactate + H2O = (2R)-3-sulfolactate + phosphate. The polypeptide is Probable 2-phosphosulfolactate phosphatase (Caldanaerobacter subterraneus subsp. tengcongensis (strain DSM 15242 / JCM 11007 / NBRC 100824 / MB4) (Thermoanaerobacter tengcongensis)).